The primary structure comprises 390 residues: Trehalose-phosphate phosphatase (390 aa).

The active-site Nucleophile is the Asp150. Mg(2+) is bound by residues Asp150, Asp152, and Asp333. Residue 150–152 (DFD) coordinates substrate.

This sequence belongs to the trehalose phosphatase family. Mg(2+) serves as cofactor.

The enzyme catalyses alpha,alpha-trehalose 6-phosphate + H2O = alpha,alpha-trehalose + phosphate. It participates in glycan biosynthesis; trehalose biosynthesis. Functionally, removes the phosphate from trehalose 6-phosphate to produce free trehalose. In Mycobacterium ulcerans (strain Agy99), this protein is Trehalose-phosphate phosphatase (otsB).